The sequence spans 903 residues: MAESLRLLHMTRSVVSFNRCLTEKISYRRVPSFSYFTDFLNQVNSVSTTNFSFVFKECAKQGALELGKQAHAHMIISGFRPTTFVLNCLLQVYTNSRDFVSASMVFDKMPLRDVVSWNKMINGYSKSNDMFKANSFFNMMPVRDVVSWNSMLSGYLQNGESLKSIEVFVDMGREGIEFDGRTFAIILKVCSFLEDTSLGMQIHGIVVRVGCDTDVVAASALLDMYAKGKRFVESLRVFQGIPEKNSVSWSAIIAGCVQNNLLSLALKFFKEMQKVNAGVSQSIYASVLRSCAALSELRLGGQLHAHALKSDFAADGIVRTATLDMYAKCDNMQDAQILFDNSENLNRQSYNAMITGYSQEEHGFKALLLFHRLMSSGLGFDEISLSGVFRACALVKGLSEGLQIYGLAIKSSLSLDVCVANAAIDMYGKCQALAEAFRVFDEMRRRDAVSWNAIIAAHEQNGKGYETLFLFVSMLRSRIEPDEFTFGSILKACTGGSLGYGMEIHSSIVKSGMASNSSVGCSLIDMYSKCGMIEEAEKIHSRFFQRANVSGTMEELEKMHNKRLQEMCVSWNSIISGYVMKEQSEDAQMLFTRMMEMGITPDKFTYATVLDTCANLASAGLGKQIHAQVIKKELQSDVYICSTLVDMYSKCGDLHDSRLMFEKSLRRDFVTWNAMICGYAHHGKGEEAIQLFERMILENIKPNHVTFISILRACAHMGLIDKGLEYFYMMKRDYGLDPQLPHYSNMVDILGKSGKVKRALELIREMPFEADDVIWRTLLGVCTIHRNNVEVAEEATAALLRLDPQDSSAYTLLSNVYADAGMWEKVSDLRRNMRGFKLKKEPGCSWVELKDELHVFLVGDKAHPRWEEIYEELGLIYSEMKPFDDSSFVRGVEVEEEDQWCYC.

The N-terminal 31 residues, Met-1–Pro-31, are a transit peptide targeting the mitochondrion. PPR repeat units lie at residues Ser-47–Pro-81, Thr-82–Arg-112, Asp-113–Arg-143, Asp-144–Phe-178, Asp-179–Thr-213, Asp-214–Lys-244, Asn-245–Val-279, Ser-280–Ala-314, Asn-346–Phe-380, Asp-381–Leu-415, Asp-416–Arg-446, Asp-447–Pro-481, Asp-482–Ser-515, Asn-516–Ser-550, Met-567–Pro-601, Asp-602–Ser-636, Asp-637–Arg-667, Asp-668–Pro-702, Asn-703–Pro-738, and Gln-739–Glu-769. Residues Ile-774 to Lys-850 form a type E motif region. The type E(+) motif stretch occupies residues Asp-851–Lys-881.

Belongs to the PPR family. PCMP-E subfamily. In terms of assembly, interacts with MORF1/RIP8.

Its subcellular location is the mitochondrion. Involved in C-to-U editing of mitochondrial RNA. Required for RNA editing at 8 sites in 6 different mRNAs in mitochondria. The protein is Pentatricopeptide repeat-containing protein At3g02330, mitochondrial (PCMP-E90) of Arabidopsis thaliana (Mouse-ear cress).